The chain runs to 237 residues: MSKYKRILLKLSGEALASTTNIIDPVTLNKIVDIIKSVLSQNIEIAIVIGGGNIFRGETLTKTGINRITSDHIGMLSTIINALAIADTCQKNKVDALVMSGLSIGGGICNSINHIYAKQALKKGKVIIFCAGTGNPCFTTDTGAALRAIEIGADAIFKATKVDGIYTDDPVKNPNAKRYNSLSFDEAIEKNLQIMDVSAFALCRKHDLEICVFSMLENTNTLSDLLKGKLLGTIVRK.

An ATP-binding site is contributed by 10-13; sequence KLSG. Position 51 (glycine 51) interacts with UMP. 2 residues coordinate ATP: glycine 52 and arginine 56. Residues aspartate 71 and 133 to 140 contribute to the UMP site; that span reads TGNPCFTT. 3 residues coordinate ATP: threonine 160, tyrosine 166, and aspartate 169.

This sequence belongs to the UMP kinase family. Homohexamer.

The protein resides in the cytoplasm. The catalysed reaction is UMP + ATP = UDP + ADP. Its pathway is pyrimidine metabolism; CTP biosynthesis via de novo pathway; UDP from UMP (UMPK route): step 1/1. Inhibited by UTP. In terms of biological role, catalyzes the reversible phosphorylation of UMP to UDP. The polypeptide is Uridylate kinase (Vesicomyosocius okutanii subsp. Calyptogena okutanii (strain HA)).